The sequence spans 532 residues: Tegument protein UL21 (532 aa).

The interval 251-276 is disordered; it reads SPSVSSAPPPSAPDASLPPPGLQEAA. Residues 257–276 show a composition bias toward pro residues; the sequence is APPPSAPDASLPPPGLQEAA.

This sequence belongs to the alphaherpesvirinae UL21 protein family. As to quaternary structure, interacts (via C-terminus) with UL16.

Its subcellular location is the virion tegument. The protein resides in the host cytoplasm. It is found in the host nucleus. In terms of biological role, may participate in DNA packaging/capsid maturation events. Promotes efficient incorporation of tegument proteins UL46, UL49, and US3 into virions. May also play a role in capsid transport to the trans-Golgi network (TGN). The polypeptide is Tegument protein UL21 (Human herpesvirus 2 (strain HG52) (HHV-2)).